The following is a 490-amino-acid chain: Cytochrome P450 2C6 (490 aa).

2 positions are modified to N6-acetyllysine: Lys-249 and Lys-375. A heme-binding site is contributed by Cys-435.

The protein belongs to the cytochrome P450 family. It depends on heme as a cofactor.

The protein resides in the endoplasmic reticulum membrane. It is found in the microsome membrane. The enzyme catalyses an organic molecule + reduced [NADPH--hemoprotein reductase] + O2 = an alcohol + oxidized [NADPH--hemoprotein reductase] + H2O + H(+). Its function is as follows. Cytochromes P450 are a group of heme-thiolate monooxygenases. In liver microsomes, this enzyme is involved in an NADPH-dependent electron transport pathway. It oxidizes a variety of structurally unrelated compounds, including steroids, fatty acids, and xenobiotics. In Rattus norvegicus (Rat), this protein is Cytochrome P450 2C6 (Cyp2c6).